The primary structure comprises 293 residues: Glycine betaine-binding protein OpuAC (293 aa).

The N-terminal stretch at 1–20 (MLKKIIGIGVSAMLALSLAA) is a signal peptide. The N-palmitoyl cysteine moiety is linked to residue Cys-21. Cys-21 carries S-diacylglycerol cysteine lipidation.

As to quaternary structure, the complex is composed of two ATP-binding proteins (OpuAA), two transmembrane proteins (OpuAB) and a solute-binding protein (OpuAC). Interacts with FloT.

The protein resides in the cell membrane. It localises to the membrane raft. Functionally, involved in a multicomponent binding-protein-dependent transport system for glycine betaine. This is Glycine betaine-binding protein OpuAC (opuAC) from Bacillus subtilis (strain 168).